A 287-amino-acid chain; its full sequence is Complement C1q-like protein 2 (287 aa).

The signal sequence occupies residues Met-1–Ala-21. The segment at Leu-65–Gly-144 is disordered. The region spanning Gly-76 to Gly-118 is the Collagen-like domain. Residues Pro-84–Pro-104 are compositionally biased toward pro residues. Over residues Gly-127–Asp-141 the composition is skewed to gly residues. The region spanning Phe-154 to Asp-287 is the C1q domain.

In terms of assembly, forms homotrimers which can further assemble to form higher-order oligomeric complexes. Interacts with ADGRB3. May interact with ERFE. Forms heterooligomers with C1QL3 and C1QL4, when proteins are coexpressed; this interaction does not occur after secretion. Post-translationally, glycosylated, but not with N-linked glycans. Highest expression in eye, followed by placenta and brain, intermediate expression in adipose tissue and lowest expression in lymph node and testis.

The protein localises to the secreted. In terms of biological role, may regulate the number of excitatory synapses that are formed on hippocampus neurons. Has no effect on inhibitory synapses. In Mus musculus (Mouse), this protein is Complement C1q-like protein 2 (C1ql2).